We begin with the raw amino-acid sequence, 612 residues long: MAYEPRGDHGGGGGGQGQDGAFVKVRGRRPVTDYGATITHWQHDRAPGYKGGYTGEAERPSASYIVDMLPPAARVTKAADSIPIKHLHSSLNKIKHPINVVRWTPEGRRLLTASTSGEFTLWNGTGFNFETIMQAHDSAIRALEYSHSDDWLISADHDGAVKYWQPNFNNVQSINAHTDPIRDLAFSPSDSKFVTASDDSTLKIFDFALGQMESKLEGHGWDAKSVDWHPTKGLLVSGSKDHLVKLWDPRTSRCLTTLHGHKSTITKVLFEKVRGACLATSARDQTARVFDLRMMRDICLLKGHEKDISTLTWHPVHPNLLSTGGMDGSLFHYLLDSPNPPPGQSFTVAPYDSPDPTTVPAQSVWPTHKVPYAHDYAIWSLDWHPLGHILASGSNDRITRFWSRARPGDAEVFQDRYHIGEAAAEAQGTWDRRGGRRQRQEEEQQEMEDEMDALVDQDAPKAGVPGLPGIPGLPLGGLPGLGSAVPPPPIPGVGAGGPPPPLPFPLPGLNGSLPPPPLPGLDPNNPPDPAQLLELMKKAGVPLPPPGALPPGLLPPGGIPPPPGGFGMPIPPPPMSALEAEKAENVRRRAPLPSQEDSLRHEQRQGKYTRAR.

A disordered region spans residues 1-21 (MAYEPRGDHGGGGGGQGQDGA). WD repeat units follow at residues 93–132 (KIKH…FETI), 135–175 (AHDS…QSIN), 177–215 (HTDP…MESK), 218–257 (GHGW…CLTT), 260–300 (GHKS…DICL), 303–345 (GHEK…PGQS), and 373–412 (AHDY…DAEV). Disordered stretches follow at residues 424-450 (AEAQ…MEDE), 486-514 (PPPP…GSLP), and 544-612 (PPPG…TRAR). The segment covering 430 to 442 (WDRRGGRRQRQEE) has biased composition (basic and acidic residues). Composition is skewed to pro residues over residues 486–506 (PPPP…PFPL) and 544–575 (PPPG…PPPM).

Its subcellular location is the nucleus. Required for 3'-end cleavage and polyadenylation of pre-mRNAs. Also involved in chromosome segregation where it has a role in chromosome attachment to the mitotic spindle. In Gibberella zeae (strain ATCC MYA-4620 / CBS 123657 / FGSC 9075 / NRRL 31084 / PH-1) (Wheat head blight fungus), this protein is Polyadenylation factor subunit 2 (PFS2).